We begin with the raw amino-acid sequence, 75 residues long: Alpha-amylase inhibitor Paim-2 (75 aa).

2 cysteine pairs are disulfide-bonded: Cys-10/Cys-26 and Cys-44/Cys-72.

Its function is as follows. Inhibits mammalian alpha-amylases specifically but has no action on plant and microbial alpha-amylases. The chain is Alpha-amylase inhibitor Paim-2 from Streptomyces olivaceoviridis (Streptomyces corchorusii).